The following is a 283-amino-acid chain: Elongation factor Ts (283 aa).

The interval 79–82 (TDFV) is involved in Mg(2+) ion dislocation from EF-Tu.

It belongs to the EF-Ts family.

It is found in the cytoplasm. Its function is as follows. Associates with the EF-Tu.GDP complex and induces the exchange of GDP to GTP. It remains bound to the aminoacyl-tRNA.EF-Tu.GTP complex up to the GTP hydrolysis stage on the ribosome. This Pseudoalteromonas translucida (strain TAC 125) protein is Elongation factor Ts.